We begin with the raw amino-acid sequence, 539 residues long: MGYKVEARSMEISMEDEDSRKKRKKGLNLPKKMKKILRNLWNVGKEDPRRVIHALKVGVALTLVSLLYLMEPFFEGVGKNALWAVMTVVVVLEFSAGATLRKGLNRGLGTLIAGSLAFFIEWVAIHSGKILGGIFIGTSVFTIGSMITYMRFIPYIKKNYDYGMLVFLLTFNLITVSSYRVDTVIKIAHERLYTIGMGIGICLFMSLLFFPIWSGDDLHKSTITKLQGLSRCIEACVSEYFEEKLKDNETSDSESDDEDLIYNGYNTVLDSKSADEALAMYAKWEPRHTRRCNKFPSQQYIKVGSVLRKFGYTVVALHGCLQTEIQTPRSIRVLFKDPCVRLAGEICKVLSELSESIQNRRHCSSEILSDSLEAALKDLNSTIKSQPKLFLGSNLHSNITNKHLNGHVSYYNETNSNGTVSYHNDNNTNGCVLGETIEENDTVSPLPLNSVVSLSSLRSVKKSAATGEKRRLRKQLSKIAVMKSLEFSEALPFAAFASLLVEMVARLDTVIDEVEELGTIACFKEYDKTVEVRIENRLI.

6 helical membrane-spanning segments follow: residues 57–77, 80–100, 107–127, 130–150, 165–185, and 192–212; these read VGVALTLVSLLYLMEPFFEGV, NALWAVMTVVVVLEFSAGATL, GLGTLIAGSLAFFIEWVAIHS, ILGGIFIGTSVFTIGSMITYM, LVFLLTFNLITVSSYRVDTVI, and LYTIGMGIGICLFMSLLFFPI.

This sequence belongs to the aromatic acid exporter (TC 2.A.85) family.

Its subcellular location is the membrane. In terms of biological role, malate transporter. The polypeptide is Aluminum-activated malate transporter 13 (ALMT13) (Arabidopsis thaliana (Mouse-ear cress)).